We begin with the raw amino-acid sequence, 339 residues long: Glucokinase (339 aa).

G16–T21 contacts ATP.

It belongs to the bacterial glucokinase family.

The protein localises to the cytoplasm. The enzyme catalyses D-glucose + ATP = D-glucose 6-phosphate + ADP + H(+). The sequence is that of Glucokinase from Sinorhizobium fredii (strain NBRC 101917 / NGR234).